A 313-amino-acid chain; its full sequence is MKKKLLAGAITLLSVATLAACSKGSEGADLISMKGDVITEHQFYEQVKSNPSAQQVLLNMTIQKVFEKQYGSELDDKEVDDTIAEEKKQYGENYQRVLSQAGMTLETRKAQIRTSKLVELAVKKVAEAELTDEAYKKAFDEYTPDVTAQIIRLNNEDKAKEVLEKAKAEGADFAQLAKDNSTDEKTKENGGEITFDSASTEVPEQVKKAAFALDVDGVSDVITATGTQAYSSQYYIVKLTKKTEKSSNIDDYKEKLKTVILTQKQNDSTFVQSIIGKELQAANIKVKDQAFQNIFTQYIGGGDSSSSSSTSNE.

The N-terminal stretch at 1–20 (MKKKLLAGAITLLSVATLAA) is a signal peptide. A lipid anchor (N-palmitoyl cysteine) is attached at cysteine 21. The S-diacylglycerol cysteine moiety is linked to residue cysteine 21. In terms of domain architecture, PpiC spans 143-241 (TPDVTAQIIR…SQYYIVKLTK (99 aa)).

This sequence belongs to the PrsA family.

It localises to the cell membrane. It catalyses the reaction [protein]-peptidylproline (omega=180) = [protein]-peptidylproline (omega=0). Its function is as follows. Plays a major role in protein secretion by helping the post-translocational extracellular folding of several secreted proteins. The polypeptide is Foldase protein PrsA (Streptococcus pneumoniae serotype 4 (strain ATCC BAA-334 / TIGR4)).